The chain runs to 428 residues: Probable oxidoreductase OrdL (428 aa).

The chain is Probable oxidoreductase OrdL (ordL) from Rhizobium meliloti (strain 1021) (Ensifer meliloti).